The primary structure comprises 66 residues: Stress-associated endoplasmic reticulum protein 1 (66 aa).

Positions 1-33 are disordered; the sequence is MVAKQRIRMANEKHSKNITQRGNVAKTSRNAPG. Residues 1-38 lie on the Cytoplasmic side of the membrane; it reads MVAKQRIRMANEKHSKNITQRGNVAKTSRNAPGEKASV. Over residues 17 to 30 the composition is skewed to polar residues; the sequence is NITQRGNVAKTSRN. A helical transmembrane segment spans residues 39 to 59; sequence GPWLLALFIFVVCGSAIFQII. At 60 to 66 the chain is on the extracellular side; it reads QSIRMGM.

This sequence belongs to the RAMP4 family. Interacts with SEC61B, SEC61A1 and the SEC61 complex. Interacts with CANX.

The protein resides in the membrane. It localises to the endoplasmic reticulum membrane. Its function is as follows. Interacts with target proteins during their translocation into the lumen of the endoplasmic reticulum. Protects unfolded target proteins against degradation during ER stress. May facilitate glycosylation of target proteins after termination of ER stress. May modulate the use of N-glycosylation sites on target proteins. The sequence is that of Stress-associated endoplasmic reticulum protein 1 (SERP1) from Pongo abelii (Sumatran orangutan).